A 540-amino-acid chain; its full sequence is Putative rhamnogalacturonase (540 aa).

An N-terminal signal peptide occupies residues 1 to 23; it reads MGFLTLFHMAFLAVSLFVSGALA. Disulfide bonds link Cys53–Cys100 and Cys192–Cys203. Asn89 carries an N-linked (GlcNAc...) asparagine glycan. Residue Asn368 is glycosylated (N-linked (GlcNAc...) asparagine).

This sequence belongs to the polysaccharide lyase 4 family.

Its subcellular location is the secreted. The catalysed reaction is Endotype eliminative cleavage of L-alpha-rhamnopyranosyl-(1-&gt;4)-alpha-D-galactopyranosyluronic acid bonds of rhamnogalacturonan I domains in ramified hairy regions of pectin leaving L-rhamnopyranose at the reducing end and 4-deoxy-4,5-unsaturated D-galactopyranosyluronic acid at the non-reducing end.. In terms of biological role, could be a pectinolytic enzyme that hydrolyzes the alpha-L-rhamnopyranosyl-(1,4)-alpha-D-galacturonopyranosyl glycosidic linkage by beta-elimination, thereby generating oligosaccharides terminating at the non-reducing end with a hex-4-enopyranosyluronic acid residue. The sequence is that of Putative rhamnogalacturonase (asd-1) from Neurospora crassa (strain ATCC 24698 / 74-OR23-1A / CBS 708.71 / DSM 1257 / FGSC 987).